Here is a 689-residue protein sequence, read N- to C-terminus: Glycine--tRNA ligase beta subunit (689 aa).

Belongs to the class-II aminoacyl-tRNA synthetase family. As to quaternary structure, tetramer of two alpha and two beta subunits.

The protein localises to the cytoplasm. The enzyme catalyses tRNA(Gly) + glycine + ATP = glycyl-tRNA(Gly) + AMP + diphosphate. The sequence is that of Glycine--tRNA ligase beta subunit from Yersinia pseudotuberculosis serotype O:1b (strain IP 31758).